A 513-amino-acid chain; its full sequence is GMP synthase [glutamine-hydrolyzing] (513 aa).

The 191-residue stretch at 8 to 198 folds into the Glutamine amidotransferase type-1 domain; sequence MILVLDFGSQ…VFGVCECEGE (191 aa). Cys-85 functions as the Nucleophile in the catalytic mechanism. Residues His-172 and Glu-174 contribute to the active site. Residues 199–388 form the GMPS ATP-PPase domain; it reads WSMENFIEIE…LGIPDEIVWR (190 aa). Residue 227–233 participates in ATP binding; that stretch reads GGVDSSV.

As to quaternary structure, homodimer.

It catalyses the reaction XMP + L-glutamine + ATP + H2O = GMP + L-glutamate + AMP + diphosphate + 2 H(+). It functions in the pathway purine metabolism; GMP biosynthesis; GMP from XMP (L-Gln route): step 1/1. Its function is as follows. Catalyzes the synthesis of GMP from XMP. The chain is GMP synthase [glutamine-hydrolyzing] (guaA) from Bacillus subtilis (strain 168).